Consider the following 212-residue polypeptide: Adenine phosphoribosyltransferase (212 aa).

This sequence belongs to the purine/pyrimidine phosphoribosyltransferase family. Homodimer.

Its subcellular location is the cytoplasm. It carries out the reaction AMP + diphosphate = 5-phospho-alpha-D-ribose 1-diphosphate + adenine. Its pathway is purine metabolism; AMP biosynthesis via salvage pathway; AMP from adenine: step 1/1. Its function is as follows. Catalyzes a salvage reaction resulting in the formation of AMP, that is energically less costly than de novo synthesis. The sequence is that of Adenine phosphoribosyltransferase from Mycobacterium tuberculosis (strain CDC 1551 / Oshkosh).